Consider the following 143-residue polypeptide: Nucleoside diphosphate kinase (143 aa).

ATP contacts are provided by Lys11, Phe59, Arg87, Thr93, Arg104, and Asn114. The active-site Pros-phosphohistidine intermediate is His117.

It belongs to the NDK family. Homotetramer. The cofactor is Mg(2+).

The protein localises to the cytoplasm. It catalyses the reaction a 2'-deoxyribonucleoside 5'-diphosphate + ATP = a 2'-deoxyribonucleoside 5'-triphosphate + ADP. The enzyme catalyses a ribonucleoside 5'-diphosphate + ATP = a ribonucleoside 5'-triphosphate + ADP. Major role in the synthesis of nucleoside triphosphates other than ATP. The ATP gamma phosphate is transferred to the NDP beta phosphate via a ping-pong mechanism, using a phosphorylated active-site intermediate. This is Nucleoside diphosphate kinase from Salmonella arizonae (strain ATCC BAA-731 / CDC346-86 / RSK2980).